The primary structure comprises 166 residues: PTS system glucose-specific EIIA component (166 aa).

In terms of domain architecture, PTS EIIA type-1 spans 34 to 138 (DPVFAQKMMG…SVISPIIITN (105 aa)). Residues His-71 and His-86 each coordinate Zn(2+). His-86 acts as the Tele-phosphohistidine intermediate; for EIIA activity in catalysis. At His-86 the chain carries Phosphohistidine; by HPr.

As to quaternary structure, heterodimer with glycerol kinase (glpk). The cofactor is Zn(2+).

It is found in the cytoplasm. Functionally, the phosphoenolpyruvate-dependent sugar phosphotransferase system (sugar PTS), a major carbohydrate active transport system, catalyzes the phosphorylation of incoming sugar substrates concomitantly with their translocation across the cell membrane. The enzyme II complex composed of PtsG and Crr is involved in glucose transport. The polypeptide is PTS system glucose-specific EIIA component (crr) (Staphylococcus aureus (strain COL)).